The following is a 217-amino-acid chain: Probable transaldolase (217 aa).

K85 acts as the Schiff-base intermediate with substrate in catalysis.

This sequence belongs to the transaldolase family. Type 3B subfamily.

Its subcellular location is the cytoplasm. The enzyme catalyses D-sedoheptulose 7-phosphate + D-glyceraldehyde 3-phosphate = D-erythrose 4-phosphate + beta-D-fructose 6-phosphate. The protein operates within carbohydrate degradation; pentose phosphate pathway; D-glyceraldehyde 3-phosphate and beta-D-fructose 6-phosphate from D-ribose 5-phosphate and D-xylulose 5-phosphate (non-oxidative stage): step 2/3. Its function is as follows. Transaldolase is important for the balance of metabolites in the pentose-phosphate pathway. In Lachnoclostridium phytofermentans (strain ATCC 700394 / DSM 18823 / ISDg) (Clostridium phytofermentans), this protein is Probable transaldolase.